The following is a 430-amino-acid chain: Tol-Pal system protein TolB (430 aa).

Positions 1–21 (MKQALRVAFGFLMLWAAVLHA) are cleaved as a signal peptide.

The protein belongs to the TolB family. In terms of assembly, the Tol-Pal system is composed of five core proteins: the inner membrane proteins TolA, TolQ and TolR, the periplasmic protein TolB and the outer membrane protein Pal. They form a network linking the inner and outer membranes and the peptidoglycan layer.

The protein resides in the periplasm. Its function is as follows. Part of the Tol-Pal system, which plays a role in outer membrane invagination during cell division and is important for maintaining outer membrane integrity. TolB occupies a key intermediary position in the Tol-Pal system because it communicates directly with both membrane-embedded components, Pal in the outer membrane and TolA in the inner membrane. This Salmonella typhi protein is Tol-Pal system protein TolB.